The sequence spans 122 residues: MIQQESRLKVADNSGARELLCIKVLGGSGRKTANIGDVIVCSVKQATPGGVVKKGDVVKAVIVRSKSGVRRNDGSYIKFDENAAVIVRDDKSPRGTRIFGPVARELRDNQFMKIVSLAPEVL.

It belongs to the universal ribosomal protein uL14 family. In terms of assembly, part of the 50S ribosomal subunit. Forms a cluster with proteins L3 and L19. In the 70S ribosome, L14 and L19 interact and together make contacts with the 16S rRNA in bridges B5 and B8.

In terms of biological role, binds to 23S rRNA. Forms part of two intersubunit bridges in the 70S ribosome. The sequence is that of Large ribosomal subunit protein uL14 from Halalkalibacterium halodurans (strain ATCC BAA-125 / DSM 18197 / FERM 7344 / JCM 9153 / C-125) (Bacillus halodurans).